The following is a 703-amino-acid chain: Elongation factor G 1 (703 aa).

The tr-type G domain maps to 8–290 (ERYRNIGISA…AVIDFLPSPV (283 aa)). GTP contacts are provided by residues 17–24 (AHIDAGKT), 88–92 (DTPGH), and 142–145 (NKMD).

Belongs to the TRAFAC class translation factor GTPase superfamily. Classic translation factor GTPase family. EF-G/EF-2 subfamily.

It is found in the cytoplasm. Its function is as follows. Catalyzes the GTP-dependent ribosomal translocation step during translation elongation. During this step, the ribosome changes from the pre-translocational (PRE) to the post-translocational (POST) state as the newly formed A-site-bound peptidyl-tRNA and P-site-bound deacylated tRNA move to the P and E sites, respectively. Catalyzes the coordinated movement of the two tRNA molecules, the mRNA and conformational changes in the ribosome. In Ralstonia nicotianae (strain ATCC BAA-1114 / GMI1000) (Ralstonia solanacearum), this protein is Elongation factor G 1.